A 106-amino-acid polypeptide reads, in one-letter code: Large ribosomal subunit protein bL21 (106 aa).

This sequence belongs to the bacterial ribosomal protein bL21 family. Part of the 50S ribosomal subunit. Contacts protein L20.

This protein binds to 23S rRNA in the presence of protein L20. This chain is Large ribosomal subunit protein bL21, found in Fervidobacterium nodosum (strain ATCC 35602 / DSM 5306 / Rt17-B1).